The primary structure comprises 381 residues: uncharacterized protein (381 aa).

The next 11 membrane-spanning stretches (helical) occupy residues Ile-10–Tyr-29, Ile-75–Leu-93, Leu-98–Arg-117, Tyr-130–Val-147, Thr-157–Tyr-179, Ile-199–Glu-221, Leu-236–Ile-255, Tyr-262–Thr-284, Asn-289–Leu-311, Ala-323–Leu-340, and Leu-355–Ile-374.

The protein resides in the cell membrane. This is an uncharacterized protein from Rickettsia prowazekii (strain Madrid E).